The primary structure comprises 202 residues: UPF0056 membrane protein CPn_1010/CP_0843/CPj1010/CpB1048 (202 aa).

Helical transmembrane passes span 7-27, 39-59, 61-81, 105-125, 137-157, and 175-195; these read LSLL…FVAL, VILR…TFGR, FFQF…FLLF, PIFF…TALL, IIFT…LCSS, and FGIA…SIAF.

This sequence belongs to the UPF0056 (MarC) family.

It is found in the cell membrane. In Chlamydia pneumoniae (Chlamydophila pneumoniae), this protein is UPF0056 membrane protein CPn_1010/CP_0843/CPj1010/CpB1048.